The sequence spans 830 residues: Scavenger receptor class F member 1 (830 aa).

The N-terminal stretch at 1 to 19 is a signal peptide; sequence MGLGLLLPLLLLWTRGTQG. Over 20 to 421 the chain is Extracellular; sequence SELDPKGQHV…CQPGSGSRDT (402 aa). EGF-like domains are found at residues 53 to 87, 95 to 130, 155 to 191, and 215 to 249; these read TIPI…AHCS, WGPD…ARCE, WSST…RRCS, and WGPE…ARCE. Cystine bridges form between cysteine 57/cysteine 69, cysteine 63/cysteine 75, cysteine 77/cysteine 86, cysteine 99/cysteine 111, cysteine 105/cysteine 118, cysteine 120/cysteine 129, cysteine 159/cysteine 172, cysteine 165/cysteine 179, cysteine 181/cysteine 190, cysteine 219/cysteine 230, cysteine 225/cysteine 237, and cysteine 239/cysteine 248. N-linked (GlcNAc...) asparagine glycosylation is present at asparagine 289. 2 consecutive EGF-like domains span residues 302 to 339 and 351 to 382; these read FGES…PRCE and CGST…PSCN. Disulfide bonds link cysteine 306–cysteine 319, cysteine 313–cysteine 326, cysteine 329–cysteine 338, cysteine 355–cysteine 363, cysteine 358–cysteine 370, and cysteine 372–cysteine 381. 2 N-linked (GlcNAc...) asparagine glycosylation sites follow: asparagine 382 and asparagine 393. A helical transmembrane segment spans residues 422–442; the sequence is ALIAGSLVPLLLLFLGLACCA. The Cytoplasmic portion of the chain corresponds to 443 to 830; it reads CCCWAPRSDL…VVPISRPPEP (388 aa). Disordered stretches follow at residues 516-539, 581-688, and 715-830; these read GWAT…PAYC, SLAR…SGPV, and FQKG…PPEP. Serine 589 and serine 606 each carry phosphoserine. The span at 634–643 shows a compositional bias: acidic residues; it reads ESTGPEEAEA. A compositionally biased stretch (low complexity) spans 644–653; sequence PESFPAAASP.

As to quaternary structure, heterophilic interaction with SREC2 via its extracellular domain. The heterophilic interaction is suppressed by the presence of ligand such as Ac-LDL. Interacts with AVIL. Endothelial cells.

The protein resides in the membrane. Functionally, mediates the binding and degradation of acetylated low density lipoprotein (Ac-LDL). Mediates heterophilic interactions, suggesting a function as adhesion protein. Plays a role in the regulation of neurite-like outgrowth. In Homo sapiens (Human), this protein is Scavenger receptor class F member 1 (SCARF1).